The chain runs to 637 residues: Tumor protein p73 (637 aa).

The tract at residues Met1–Asp46 is transactivation. Thr27 carries the post-translational modification Phosphothreonine. At Tyr28 the chain carries Phosphotyrosine; by SRC and HCK. Residues Arg78–Ser104 form a disordered region. A compositionally biased stretch (polar residues) spans Pro94–Ser104. Residue Tyr99 is modified to Phosphotyrosine. Positions Phe131–Arg310 are DNA-binding. Zn(2+)-binding residues include Cys194, His197, Cys258, and Cys262. A compositionally biased stretch (basic and acidic residues) spans Asp301–Glu311. The segment at Asp301 to Asp351 is disordered. The interval Lys345–Leu380 is interaction with HIPK2. Residues Lys345 to Val386 form an oligomerization region. The PPxY motif signature appears at Pro483–Tyr487. The 67-residue stretch at Pro485 to Gly551 folds into the SAM domain. Lys628 is covalently cross-linked (Glycyl lysine isopeptide (Lys-Gly) (interchain with G-Cter in SUMO); in isoform Alpha). Residue Lys628 forms a Glycyl lysine isopeptide (Lys-Gly) (interchain with G-Cter in SUMO2) linkage.

The protein belongs to the p53 family. In terms of assembly, found in a complex with p53/TP53 and CABLES1. The C-terminal oligomerization domain binds to the ABL1 tyrosine kinase SH3 domain. Interacts with HECW2. Isoforms Alpha and Beta interact with HIPK2. Isoform Alpha interacts with RANBP9. Interacts with WWOX. Isoform Beta interacts homotypically and with p53, whereas isoform Alpha does not. Interacts (via SAM domain) with FBXO45 (via B30.2/SPRY domain). Interacts with YAP1 (phosphorylated form). Interacts with HCK (via SH3 domain); this inhibits TP73 activity and degradation. It depends on Zn(2+) as a cofactor. Isoform Alpha (but not isoform Beta) is sumoylated on Lys-628, which potentiates proteasomal degradation but does not affect transcriptional activity. In terms of processing, polyubiquitinated by RCHY1/PIRH2; leading to its degradation by the proteasome.

Its subcellular location is the nucleus. The protein resides in the cytoplasm. Its function is as follows. Participates in the apoptotic response to DNA damage. May be a tumor suppressor protein. Is an activator of FOXJ1 expression, essential for the positive regulation of lung ciliated cell differentiation. The chain is Tumor protein p73 (TP73) from Chlorocebus aethiops (Green monkey).